A 160-amino-acid chain; its full sequence is Ribosomal RNA large subunit methyltransferase H (160 aa).

Residues Leu-77, Gly-109, and 128–133 (FSRMTF) each bind S-adenosyl-L-methionine.

The protein belongs to the RNA methyltransferase RlmH family. As to quaternary structure, homodimer.

It localises to the cytoplasm. It carries out the reaction pseudouridine(1915) in 23S rRNA + S-adenosyl-L-methionine = N(3)-methylpseudouridine(1915) in 23S rRNA + S-adenosyl-L-homocysteine + H(+). In terms of biological role, specifically methylates the pseudouridine at position 1915 (m3Psi1915) in 23S rRNA. The polypeptide is Ribosomal RNA large subunit methyltransferase H (Pelotomaculum thermopropionicum (strain DSM 13744 / JCM 10971 / SI)).